Here is a 267-residue protein sequence, read N- to C-terminus: Small ribosomal subunit protein uS3 (267 aa).

The 69-residue stretch at 43 to 111 (IRKEMSKDLE…QVQLNIFEVK (69 aa)) folds into the KH type-2 domain. The tract at residues 216–267 (FEEQQAQQNNRPGRRGGDRRPRRGNRSAAPQAAEAPKAEAPAEAAPAAETKE) is disordered. The span at 241-267 (RSAAPQAAEAPKAEAPAEAAPAAETKE) shows a compositional bias: low complexity.

This sequence belongs to the universal ribosomal protein uS3 family. In terms of assembly, part of the 30S ribosomal subunit. Forms a tight complex with proteins S10 and S14.

Functionally, binds the lower part of the 30S subunit head. Binds mRNA in the 70S ribosome, positioning it for translation. This chain is Small ribosomal subunit protein uS3, found in Bifidobacterium longum subsp. infantis (strain ATCC 15697 / DSM 20088 / JCM 1222 / NCTC 11817 / S12).